The chain runs to 452 residues: Argininosuccinate lyase (452 aa).

A disordered region spans residues 431–452; that stretch reads AFRKDSTGSTSPKWSFRAMRRA.

Belongs to the lyase 1 family. Argininosuccinate lyase subfamily.

It localises to the cytoplasm. The catalysed reaction is 2-(N(omega)-L-arginino)succinate = fumarate + L-arginine. It functions in the pathway amino-acid biosynthesis; L-arginine biosynthesis; L-arginine from L-ornithine and carbamoyl phosphate: step 3/3. The chain is Argininosuccinate lyase from Tremblaya princeps.